The sequence spans 187 residues: Adenylate kinase (187 aa).

An ATP-binding site is contributed by 11–16 (GAGKGT). The NMP stretch occupies residues 31–60 (STGDILREAVKNQTPMGIEAKRYMDAGDLV). AMP contacts are provided by residues Thr-32, Arg-37, 58 to 60 (DLV), 86 to 89 (GFPR), and Gln-93. Positions 127 to 137 (GRAEIEGRADD) are LID. Arg-128 is an ATP binding site. Residues Arg-134 and Arg-145 each contribute to the AMP site. ATP is bound at residue Gly-173.

The protein belongs to the adenylate kinase family. As to quaternary structure, monomer.

It is found in the cytoplasm. It carries out the reaction AMP + ATP = 2 ADP. Its pathway is purine metabolism; AMP biosynthesis via salvage pathway; AMP from ADP: step 1/1. Its function is as follows. Catalyzes the reversible transfer of the terminal phosphate group between ATP and AMP. Plays an important role in cellular energy homeostasis and in adenine nucleotide metabolism. This chain is Adenylate kinase, found in Leptospira borgpetersenii serovar Hardjo-bovis (strain JB197).